The primary structure comprises 199 residues: Lipid A acyltransferase PagP (199 aa).

A signal peptide spans 1–25; that stretch reads MNYKDIINACILSGVFLLHSPSALA. Residues His-74, Asp-117, and Ser-118 contribute to the active site.

This sequence belongs to the lipid A palmitoyltransferase family. As to quaternary structure, homodimer.

The protein localises to the cell outer membrane. It carries out the reaction a lipid A + a 1,2-diacyl-sn-glycero-3-phosphocholine = a hepta-acyl lipid A + a 2-acyl-sn-glycero-3-phosphocholine. It catalyses the reaction a lipid IVA + a 1,2-diacyl-sn-glycero-3-phosphocholine = a lipid IVB + a 2-acyl-sn-glycero-3-phosphocholine. The catalysed reaction is a lipid IIA + a 1,2-diacyl-sn-glycero-3-phosphocholine = a lipid IIB + a 2-acyl-sn-glycero-3-phosphocholine. In terms of biological role, transfers a fatty acid residue from the sn-1 position of a phospholipid to the N-linked hydroxyfatty acid chain on the proximal unit of lipid A or its precursors. The chain is Lipid A acyltransferase PagP from Yersinia pestis bv. Antiqua (strain Antiqua).